The following is a 112-amino-acid chain: Small ribosomal subunit protein bS6 (112 aa).

It belongs to the bacterial ribosomal protein bS6 family.

In terms of biological role, binds together with bS18 to 16S ribosomal RNA. The polypeptide is Small ribosomal subunit protein bS6 (Chlamydia caviae (strain ATCC VR-813 / DSM 19441 / 03DC25 / GPIC) (Chlamydophila caviae)).